The sequence spans 395 residues: Protein UNIFOLIATA (395 aa).

2 disordered regions span residues serine 147 to serine 170 and glutamine 185 to glutamine 223. Residues glutamate 202–asparagine 211 are compositionally biased toward acidic residues. 3 DNA-binding regions span residues arginine 224–phenylalanine 228, asparagine 293–tyrosine 300, and tyrosine 364–threonine 367.

Belongs to the FLO/LFY family. Highly expressed in leaf, leaflet, inflorescence and lateral shoot primordia on the main shoot axis, and in floral organ and carpel primordia.

The protein localises to the nucleus. Its function is as follows. May regulate indeterminacy during leaf and flower development. The chain is Protein UNIFOLIATA (UNI) from Pisum sativum (Garden pea).